A 480-amino-acid polypeptide reads, in one-letter code: Vacuolar amino acid transporter 2 (480 aa).

The disordered stretch occupies residues 21-48; the sequence is LTNFPFPGTTDNDSDDGSQGQNSLNIIT. Residues 37-46 show a composition bias toward polar residues; sequence GSQGQNSLNI. 9 consecutive transmembrane segments (helical) span residues 72-92, 95-115, 145-165, 214-234, 263-283, 297-317, 338-358, 394-414, and 447-467; these read AFMN…PFAI, AGIL…DWTL, LILF…CIII, LSKA…TVVI, LSVI…FFSM, ISII…FAVF, IARL…IFVL, VFIT…FELI, and FYLC…QTII.

Belongs to the amino acid/polyamine transporter 2 family.

The protein localises to the vacuole membrane. Probable amino acid transporter of unknown specificity. The polypeptide is Vacuolar amino acid transporter 2 (AVT2) (Saccharomyces cerevisiae (strain ATCC 204508 / S288c) (Baker's yeast)).